A 388-amino-acid chain; its full sequence is Protein TsgA homolog (388 aa).

The next 12 membrane-spanning stretches (helical) occupy residues Cys-12–Leu-32, Thr-51–Ile-71, Leu-77–Leu-97, Ile-102–Ile-122, Leu-137–Ile-157, Trp-163–Asn-183, Phe-203–Ile-223, Ser-246–Phe-266, Ile-272–Tyr-292, Leu-294–Ile-314, Tyr-331–Val-351, and Ile-356–Ile-376.

The protein belongs to the major facilitator superfamily. TsgA family.

It localises to the cell membrane. This is Protein TsgA homolog from Buchnera aphidicola subsp. Baizongia pistaciae (strain Bp).